The sequence spans 154 residues: MKTIEGNLQLKGNEKIAIIASRFNHLITDRLVEGAKDAFLRNGGKEENIELILVPGAFELPFGLKRAIKTGKYDGIVCVGAVIRGATPHFDYVAAEATKGIANTTLQADIPVTFGLLTTDTIEQAIERAGTKAGNKGFEAMLGLIEMINLYKEL.

Residues F23, 57–59 (AFE), and 81–83 (AVI) contribute to the 5-amino-6-(D-ribitylamino)uracil site. Position 86-87 (86-87 (AT)) interacts with (2S)-2-hydroxy-3-oxobutyl phosphate. Catalysis depends on H89, which acts as the Proton donor. F114 serves as a coordination point for 5-amino-6-(D-ribitylamino)uracil. R128 provides a ligand contact to (2S)-2-hydroxy-3-oxobutyl phosphate.

This sequence belongs to the DMRL synthase family.

It catalyses the reaction (2S)-2-hydroxy-3-oxobutyl phosphate + 5-amino-6-(D-ribitylamino)uracil = 6,7-dimethyl-8-(1-D-ribityl)lumazine + phosphate + 2 H2O + H(+). It functions in the pathway cofactor biosynthesis; riboflavin biosynthesis; riboflavin from 2-hydroxy-3-oxobutyl phosphate and 5-amino-6-(D-ribitylamino)uracil: step 1/2. In terms of biological role, catalyzes the formation of 6,7-dimethyl-8-ribityllumazine by condensation of 5-amino-6-(D-ribitylamino)uracil with 3,4-dihydroxy-2-butanone 4-phosphate. This is the penultimate step in the biosynthesis of riboflavin. This chain is 6,7-dimethyl-8-ribityllumazine synthase, found in Nautilia profundicola (strain ATCC BAA-1463 / DSM 18972 / AmH).